Consider the following 297-residue polypeptide: UDP-N-acetylenolpyruvoylglucosamine reductase (297 aa).

The FAD-binding PCMH-type domain maps to 24 to 189 (KVGGNAEIFF…LKAIFKVNKG (166 aa)). Arg169 is an active-site residue. Catalysis depends on Ser218, which acts as the Proton donor. Glu289 is a catalytic residue.

The protein belongs to the MurB family. It depends on FAD as a cofactor.

It localises to the cytoplasm. It carries out the reaction UDP-N-acetyl-alpha-D-muramate + NADP(+) = UDP-N-acetyl-3-O-(1-carboxyvinyl)-alpha-D-glucosamine + NADPH + H(+). The protein operates within cell wall biogenesis; peptidoglycan biosynthesis. Cell wall formation. The protein is UDP-N-acetylenolpyruvoylglucosamine reductase of Rickettsia canadensis (strain McKiel).